A 95-amino-acid polypeptide reads, in one-letter code: Beta-alanine degradation protein BauB (95 aa).

Positions Trp-23–Val-90 constitute a Cupin type-2 domain.

Functionally, involved in the degradation of beta-alanine. In Pseudomonas aeruginosa (strain ATCC 15692 / DSM 22644 / CIP 104116 / JCM 14847 / LMG 12228 / 1C / PRS 101 / PAO1), this protein is Beta-alanine degradation protein BauB (bauB).